The chain runs to 358 residues: Envelope glycoprotein K (358 aa).

The signal sequence occupies residues 1 to 33 (MSRVQCLRLAAVIASISHLIFLVWFVCWNSVLE). Over 34 to 141 (NNEDCVYATR…LEMADCMAYL (108 aa)) the chain is Extracellular. N-linked (GlcNAc...) asparagine; by host glycosylation is found at asparagine 57 and asparagine 80. A helical transmembrane segment spans residues 142–162 (WFFQVRTATAALLMYLAFLCV). At 163-235 (NRQRRGFGPW…DTLGFYLMHP (73 aa)) the chain is on the cytoplasmic side. Residues 236–256 (LALLLRAIETILYFASLVASA) form a helical membrane-spanning segment. The Extracellular portion of the chain corresponds to 257 to 273 (TVLRVNFDPCSVVLPNH). A helical transmembrane segment spans residues 274–294 (VKVFAWVFVAALGALEVVSAI). The Cytoplasmic segment spans residues 295–323 (DHLRRETRSARDAAAVIRPTNIIAACCAN). The helical transmembrane segment at 324 to 344 (IISHVLLRMLYGAALVLVVIG) threads the bilayer. Residues 345 to 358 (ALKYEREIQTRLLG) lie on the Extracellular side of the membrane.

It belongs to the alphaherpesvirinae glycoprotein K family. Interacts (via UL20 interaction region) with protein UL20 (via N-terminus); this interaction probably plays a role in the coordinate transport of protein UL20 and gK to the trans-Golgi network (TGN), and is required for the cell surface expression of gK.

The protein localises to the host cell membrane. Its subcellular location is the host endosome membrane. It is found in the host Golgi apparatus membrane. Its function is as follows. Glycoprotein that probably modulates membrane fusion events during secondary envelopment of cytoplasmic capsids that bud into specific trans-Golgi network (TGN)-derived membranes. Also plays a role, together with gB, in virus-induced cell-to-cell fusion (syncytia formation). Seems to block fusion of virions with infected-cell membranes. The protein is Envelope glycoprotein K (gK) of Psittacid herpesvirus 1 (isolate Amazon parrot/-/97-0001/1997) (PsHV-1).